The chain runs to 151 residues: 3-hydroxyacyl-[acyl-carrier-protein] dehydratase FabZ (151 aa).

Residue H54 is part of the active site.

This sequence belongs to the thioester dehydratase family. FabZ subfamily.

The protein localises to the cytoplasm. The catalysed reaction is a (3R)-hydroxyacyl-[ACP] = a (2E)-enoyl-[ACP] + H2O. Involved in unsaturated fatty acids biosynthesis. Catalyzes the dehydration of short chain beta-hydroxyacyl-ACPs and long chain saturated and unsaturated beta-hydroxyacyl-ACPs. This chain is 3-hydroxyacyl-[acyl-carrier-protein] dehydratase FabZ, found in Pectobacterium atrosepticum (strain SCRI 1043 / ATCC BAA-672) (Erwinia carotovora subsp. atroseptica).